The sequence spans 426 residues: Enolase (426 aa).

A (2R)-2-phosphoglycerate-binding site is contributed by Q163. Residue E205 is the Proton donor of the active site. Mg(2+)-binding residues include D242, E283, and D310. (2R)-2-phosphoglycerate is bound by residues K335, R364, S365, and K386. The Proton acceptor role is filled by K335.

Belongs to the enolase family. Requires Mg(2+) as cofactor.

It is found in the cytoplasm. It localises to the secreted. The protein resides in the cell surface. It carries out the reaction (2R)-2-phosphoglycerate = phosphoenolpyruvate + H2O. It functions in the pathway carbohydrate degradation; glycolysis; pyruvate from D-glyceraldehyde 3-phosphate: step 4/5. Its function is as follows. Catalyzes the reversible conversion of 2-phosphoglycerate (2-PG) into phosphoenolpyruvate (PEP). It is essential for the degradation of carbohydrates via glycolysis. This chain is Enolase, found in Clavibacter michiganensis subsp. michiganensis (strain NCPPB 382).